The primary structure comprises 152 residues: Small ribosomal subunit protein uS19u (152 aa).

This sequence belongs to the universal ribosomal protein uS19 family.

The protein localises to the cytoplasm. The protein is Small ribosomal subunit protein uS19u (RPS15A) of Arabidopsis thaliana (Mouse-ear cress).